Reading from the N-terminus, the 92-residue chain is Putative membrane protein insertion efficiency factor (92 aa).

It belongs to the UPF0161 family.

The protein localises to the cell membrane. In terms of biological role, could be involved in insertion of integral membrane proteins into the membrane. This chain is Putative membrane protein insertion efficiency factor, found in Tropheryma whipplei (strain TW08/27) (Whipple's bacillus).